We begin with the raw amino-acid sequence, 673 residues long: Potassium voltage-gated channel subfamily KQT member 1 (673 aa).

Disordered stretches follow at residues Met-1 to Ala-28 and Gly-61 to Arg-80. The Cytoplasmic portion of the chain corresponds to Met-1–Trp-118. Ser-27 carries the post-translational modification Phosphoserine. Over residues Ala-66 to Ala-75 the composition is skewed to low complexity. The helical transmembrane segment at Lys-119–Leu-140 threads the bilayer. Residues Ser-141 to Thr-151 lie on the Extracellular side of the membrane. Residues Gly-152–Trp-174 traverse the membrane as a helical segment. Over Ser-175 to Arg-190 the chain is Cytoplasmic. Residues Phe-191–Lys-216 form a helical membrane-spanning segment. Topologically, residues Gly-217–Ala-224 are extracellular. A helical; Voltage-sensor transmembrane segment spans residues Ile-225–Asp-240. The segment at Met-236 to Gly-244 is interaction with KCNE3. Residues Arg-241–Gln-258 are Cytoplasmic-facing. An a 1,2-diacyl-sn-glycero-3-phospho-(1D-myo-inositol-4,5-bisphosphate)-binding site is contributed by Gln-242. The helical transmembrane segment at Glu-259–Ala-281 threads the bilayer. Over Glu-282–Tyr-297 the chain is Extracellular. Asn-287 carries an N-linked (GlcNAc...) asparagine glycan. The pore-forming intramembrane region spans Ala-298–Pro-318. The Extracellular portion of the chain corresponds to Gln-319 to Thr-320. A helical transmembrane segment spans residues Trp-321–Gly-346. Residues Ser-347–Ser-673 lie on the Cytoplasmic side of the membrane. The interval Ala-368 to Tyr-380 is interaction with CALM. A phosphoserine mark is found at Ser-405 and Ser-407. Positions Lys-514–Phe-528 are interaction with CALM; calcium-dependent. The interaction with KCNE1 C-terminus stretch occupies residues Pro-534–Leu-571. The interaction with AKAP9 stretch occupies residues Ile-587 to Leu-615. The segment at Gly-588–His-619 is C-terminal assembly domain (tetramerization). The tract at residues His-619–Ser-673 is disordered. The span at Gly-622 to Ala-634 shows a compositional bias: gly residues.

Belongs to the potassium channel family. KQT (TC 1.A.1.15) subfamily. Kv7.1/KCNQ1 sub-subfamily. In terms of assembly, tetramer. Heterotetramer with KCNE1; targets to the membrane raft. Interacts (via C-terminus) with CALM; forms a heterooctameric structure (with 4:4 KCNQ1:CALM stoichiometry) in a calcium-independent manner. Interacts with AKAP9; targets protein kinase A (PKA) catalytic and regulatory subunits and protein phosphatase 1 (PP1) to the KCNQ1-KCNE1 complex, allowing PKA-mediated phosphorylation and increase of delayed rectifier potassium channel activity. Interacts with KCNE2; form a heterooligomer complex that targets to the membrane raft and leading to currents with an apparently instantaneous activation, a rapid deactivation process and a linear current-voltage relationship and decreases the amplitude of the outward current. Interacts with AP2M1; mediates estrogen-induced internalization via clathrin-coated vesicles. Interacts with NEDD4L; promotes internalization and decreases I(Ks) currents. Interacts with USP2; counteracts the NEDD4L-specific down-regulation of I(Ks) and restore plasma membrane localization. Heterotetramer with KCNQ5; has a voltage-gated potassium channel activity. Interacts with KCNE3; four KCNE3 molecules are bound to one KCNQ1 tetramer (4:4 KCNQ1:KCNE3 stoichiometry); alters membrane raft localization; affects KCNQ1 structure and gating properties. Interacts with KCNE4; impairs KCNQ1 localization in lipid rafts and inhibits voltage-gated potassium channel activity. Interacts with KCNE5; impairs KCNQ1 localization in lipid rafts and only conducts current upon strong and continued depolarization. Interacts with SLC5A3; forms coregulatory channel-transporter complexes that modulate Na(+)-coupled myo-inositol influx through the transporter. In terms of processing, ubiquitinated by NEDD4L; promotes internalization. The ubiquitinylated form is internalized through a clathrin-mediated endocytosis by interacting with AP2M1 and is recycled back to the cell membrane via RAB4A and RAB11A. Deubiquitinated by USP2; counteracts the NEDD4L-specific down-regulation of I(Ks) and restores the membrane localization.

The protein resides in the cell membrane. Its subcellular location is the cytoplasmic vesicle membrane. The protein localises to the early endosome. It is found in the membrane raft. It localises to the endoplasmic reticulum. The protein resides in the basolateral cell membrane. Its subcellular location is the apical cell membrane. The catalysed reaction is K(+)(in) = K(+)(out). With respect to regulation, PIP2 molecule is essential to activate KCNQ channels by inducing the coupling of the voltage-sensing domain (VSD) and the pore-forming domain (PD). Upon channel activation, PIP2 disrupts the VSD-calmodulin/CALM interactions, causing the release of CALM from the VSD which triggers the opening of the gate. Calcium potentiates KCNQ1 channel current through calcium-bound CALM. Calcium-bound CALM competes with PIP2 to stabilize the channel open state. Pore-forming subunit of the voltage-gated potassium (Kv) channel involved in the regulation of cardiomyocyte excitability and important in normal development and functions of myocardium, inner ear, stomach and colon. Associates with KCNE beta subunits that modulates current kinetics. Induces a voltage-dependent by rapidly activating and slowly deactivating potassium-selective outward current. Also promotes a delayed voltage activated potassium current showing outward rectification characteristic. During beta-adrenergic receptor stimulation participates in cardiac repolarization by associating with KCNE1 to form the I(Ks) cardiac potassium current that increases the amplitude and slows down the activation kinetics of outward potassium current I(Ks). Muscarinic agonist oxotremorine-M strongly suppresses KCNQ1/KCNE1 current. When associated with KCNE3, forms the potassium channel that is important for cyclic AMP-stimulated intestinal secretion of chloride ions. This interaction with KCNE3 is reduced by 17beta-estradiol, resulting in the reduction of currents. During conditions of increased substrate load, maintains the driving force for proximal tubular and intestinal sodium ions absorption, gastric acid secretion, and cAMP-induced jejunal chloride ions secretion. Allows the provision of potassium ions to the luminal membrane of the secretory canaliculus in the resting state as well as during stimulated acid secretion. When associated with KCNE2, forms a heterooligomer complex leading to currents with an apparently instantaneous activation, a rapid deactivation process and a linear current-voltage relationship and decreases the amplitude of the outward current. When associated with KCNE4, inhibits voltage-gated potassium channel activity. When associated with KCNE5, this complex only conducts current upon strong and continued depolarization. Also forms a heterotetramer with KCNQ5 that has a voltage-gated potassium channel activity. Binds with phosphatidylinositol 4,5-bisphosphate. KCNQ1-KCNE2 channel associates with Na(+)-coupled myo-inositol symporter in the apical membrane of choroid plexus epithelium and regulates the myo-inositol gradient between blood and cerebrospinal fluid with an impact on neuron excitability. This is Potassium voltage-gated channel subfamily KQT member 1 from Sus scrofa (Pig).